The following is a 187-amino-acid chain: Orotate phosphoribosyltransferase (187 aa).

110–118 serves as a coordination point for 5-phospho-alpha-D-ribose 1-diphosphate; that stretch reads EDVVTTGGS. Orotate is bound by residues T114 and R142.

The protein belongs to the purine/pyrimidine phosphoribosyltransferase family. PyrE subfamily. In terms of assembly, homodimer. The cofactor is Mg(2+).

It carries out the reaction orotidine 5'-phosphate + diphosphate = orotate + 5-phospho-alpha-D-ribose 1-diphosphate. It participates in pyrimidine metabolism; UMP biosynthesis via de novo pathway; UMP from orotate: step 1/2. Catalyzes the transfer of a ribosyl phosphate group from 5-phosphoribose 1-diphosphate to orotate, leading to the formation of orotidine monophosphate (OMP). The polypeptide is Orotate phosphoribosyltransferase (Thermotoga neapolitana (strain ATCC 49049 / DSM 4359 / NBRC 107923 / NS-E)).